The following is a 660-amino-acid chain: Arginine--tRNA ligase, cytoplasmic (660 aa).

An N-acetylmethionine modification is found at Met1. Residues 1-72 are could be involved in the assembly of the multisynthetase complex; it reads MDALVAHCSA…QAERNKPTKT (72 aa). L-arginine-binding positions include 200–202, His211, Tyr384, Asp388, and Gln412; that span reads SPN. Positions 201-212 match the 'HIGH' region motif; sequence PNIAKEMHVGHL. Residues 529 to 543 form an interaction with tRNA region; sequence NTAAYLLYAFTRIRS.

This sequence belongs to the class-I aminoacyl-tRNA synthetase family. As to quaternary structure, interacts (via N-terminus) with AIMP1 (via N-terminus); this stimulates its catalytic activity. Interacts (via N-terminus) with LARS2 (via C-terminus). Monomer. Part of a multisubunit complex that groups tRNA ligases for Arg (RARS1), Asp (DARS1), Gln (QARS1), Ile (IARS1), Leu (LARS1), Lys (KARS1), Met (MARS1) the bifunctional ligase for Glu and Pro (EPRS1) and the auxiliary subunits AIMP1/p43, AIMP2/p38 and EEF1E1/p18. Interacts with QARS1. Part of a complex composed of RARS1, QARS1 and AIMP1.

It is found in the cytoplasm. Its subcellular location is the cytosol. The enzyme catalyses tRNA(Arg) + L-arginine + ATP = L-arginyl-tRNA(Arg) + AMP + diphosphate. In terms of biological role, forms part of a macromolecular complex that catalyzes the attachment of specific amino acids to cognate tRNAs during protein synthesis. Modulates the secretion of AIMP1 and may be involved in generation of the inflammatory cytokine EMAP2 from AIMP1. The protein is Arginine--tRNA ligase, cytoplasmic (RARS1) of Bos taurus (Bovine).